The chain runs to 496 residues: UDP-N-acetylmuramoylalanine--D-glutamate ligase (496 aa).

130–136 (GTNGKTT) is an ATP binding site.

Belongs to the MurCDEF family. Interacts with PknA. Phosphorylated by PknA.

It localises to the cytoplasm. The catalysed reaction is UDP-N-acetyl-alpha-D-muramoyl-L-alanine + D-glutamate + ATP = UDP-N-acetyl-alpha-D-muramoyl-L-alanyl-D-glutamate + ADP + phosphate + H(+). It participates in cell wall biogenesis; peptidoglycan biosynthesis. In terms of biological role, cell wall formation. Catalyzes the addition of glutamate to the nucleotide precursor UDP-N-acetylmuramoyl-L-alanine (UMA). The polypeptide is UDP-N-acetylmuramoylalanine--D-glutamate ligase (Mycobacterium tuberculosis (strain ATCC 25177 / H37Ra)).